The primary structure comprises 224 residues: UPF0758 protein Mmwyl1_0624 (224 aa).

The MPN domain occupies 102–224 (VFASAEHVRT…PVSLAERGLV (123 aa)). 3 residues coordinate Zn(2+): His173, His175, and Asp186. The short motif at 173–186 (HNHPSGIAEPSQAD) is the JAMM motif element.

It belongs to the UPF0758 family.

This Marinomonas sp. (strain MWYL1) protein is UPF0758 protein Mmwyl1_0624.